Reading from the N-terminus, the 65-residue chain is Lantibiotic lacticin 3147 A2 (65 aa).

Residues 1–36 constitute a propeptide that is removed on maturation; that stretch reads MKEKNMKKNDTIELQLGKYLEDDMIELAEGDESHGG. Threonine 37 is modified (2-oxobutanoic acid). Threonine 38 and threonine 41 each carry 2,3-didehydrobutyrine. 2 positions are modified to 2,3-didehydroalanine (Ser): serine 45 and serine 48. A cross-link (lanthionine (Ser-Cys)) is located at residues 52–56; it reads STNTC. Cross-links (beta-methyllanthionine (Thr-Cys)) lie at residues 58–61 and 62–65; these read TTKC and TRAC.

Post-translationally, maturation of lantibiotics involves the enzymatic conversion of Thr, and Ser into dehydrated AA and the formation of thioether bonds with cysteine. This is followed by membrane translocation and cleavage of the modified precursor. In terms of processing, it is not established whether the 2,3-didehydrobutyrines are the E- or Z-isomers. In the NMR model they were assumed to be the Z-isomer.

The protein resides in the secreted. Lanthionine-containing peptide antibiotic (lantibiotic) active on Gram-positive bacteria. The bactericidal activity of lantibiotics is based on depolarization of energized bacterial cytoplasmic membranes, initiated by the formation of aqueous transmembrane pores. When present individually lacticin 3147 A2 exhibits weak activity towards L.lactis strain AM2 and L.lactis strain HP, and no activity towards L.lactis strain IFPL359, but when combined with lacticin 3147 A1 it displays strong activity towards all three strains. This chain is Lantibiotic lacticin 3147 A2, found in Lactococcus lactis subsp. lactis (Streptococcus lactis).